Consider the following 649-residue polypeptide: PTS system mannitol-specific EIICBA component (649 aa).

The 330-residue stretch at 13–342 (FGRFLSNMVM…LLMKAQTSTE (330 aa)) folds into the PTS EIIC type-2 domain. 6 helical membrane passes run 25–46 (IGAF…WVPN), 51–71 (SLVG…TGGK), 135–156 (SAGI…PFVK), 166–186 (VNFL…EPAK), 274–293 (AIAG…AGLV), and 314–335 (LGVV…ALLM). In terms of domain architecture, PTS EIIB type-2 spans 384 to 475 (QSIIVACDAG…LVTQLLAAKR (92 aa)). Residue Cys390 is the Phosphocysteine intermediate; for EIIB activity of the active site. Cys390 is subject to Phosphocysteine; by EIIA. The region spanning 504–646 (FQLQKENIHL…SDVLSILATS (143 aa)) is the PTS EIIA type-2 domain. Residue His564 is the Tele-phosphohistidine intermediate; for EIIA activity of the active site. Phosphohistidine; by HPr is present on His564.

Homodimer. In terms of processing, an intramolecular phosphotransfer takes places between His-564 and Cys-390.

It is found in the cell inner membrane. The enzyme catalyses D-mannitol(out) + N(pros)-phospho-L-histidyl-[protein] = D-mannitol 1-phosphate(in) + L-histidyl-[protein]. Functionally, the phosphoenolpyruvate-dependent sugar phosphotransferase system (sugar PTS), a major carbohydrate active transport system, catalyzes the phosphorylation of incoming sugar substrates concomitantly with their translocation across the cell membrane. This system is involved in D-mannitol transport. This chain is PTS system mannitol-specific EIICBA component (mtlA), found in Vibrio cholerae serotype O1 (strain ATCC 39315 / El Tor Inaba N16961).